The following is a 640-amino-acid chain: Threonine--tRNA ligase (640 aa).

The region spanning 1–59 is the TGS domain; it reads MKIKVKLPDGKEKEYDRGITPAEIAKELGIKKAIGAVVNGELWDLKRPIENDCELRLVT. Residues 240–531 form a catalytic region; that stretch reads DHRKLGPQLE…LIEHFAGAFP (292 aa). Residues Cys332, His383, and His508 each contribute to the Zn(2+) site.

The protein belongs to the class-II aminoacyl-tRNA synthetase family. In terms of assembly, homodimer. It depends on Zn(2+) as a cofactor.

The protein localises to the cytoplasm. The enzyme catalyses tRNA(Thr) + L-threonine + ATP = L-threonyl-tRNA(Thr) + AMP + diphosphate + H(+). In terms of biological role, catalyzes the attachment of threonine to tRNA(Thr) in a two-step reaction: L-threonine is first activated by ATP to form Thr-AMP and then transferred to the acceptor end of tRNA(Thr). Also edits incorrectly charged L-seryl-tRNA(Thr). This chain is Threonine--tRNA ligase, found in Thermotoga maritima (strain ATCC 43589 / DSM 3109 / JCM 10099 / NBRC 100826 / MSB8).